Reading from the N-terminus, the 181-residue chain is CASP-like protein 1F1 (181 aa).

At 1-18 the chain is on the cytoplasmic side; that stretch reads MPNNEAKFSVNQPLKTQK. The chain crosses the membrane as a helical span at residues 19–39; it reads LFIGVQIFFRIVAIAASVASS. Topologically, residues 40–70 are extracellular; the sequence is WLMITSKQVIDIGGIVLDARYSYSPEFKFLA. The helical transmembrane segment at 71–91 threads the bilayer; the sequence is FTNIVVGCFSLLSLLFLVLVV. The Cytoplasmic portion of the chain corresponds to 92-100; it reads RQGSNPNHY. The helical transmembrane segment at 101-121 threads the bilayer; that stretch reads FFLFLHDLAMMSLVVGGCAAA. Residues 122–152 lie on the Extracellular side of the membrane; that stretch reads TTVGFLGKHGNSHTGWMQICDNFGKFCNRAQ. Residues 153-173 traverse the membrane as a helical segment; sequence TSVTISYLNLICLSILTITSA. Residues 174–181 lie on the Cytoplasmic side of the membrane; sequence SKSRKMEA.

It belongs to the Casparian strip membrane proteins (CASP) family. In terms of assembly, homodimer and heterodimers.

The protein resides in the cell membrane. This Populus trichocarpa (Western balsam poplar) protein is CASP-like protein 1F1.